A 107-amino-acid chain; its full sequence is Wound-induced proteinase inhibitor 1 (107 aa).

The first 23 residues, 1-23 (MESKFAHIIVFFLLATSFETLLA), serve as a signal peptide directing secretion. A propeptide spanning residues 24 to 36 (RKESDGPEVIELQ) is cleaved from the precursor.

This sequence belongs to the protease inhibitor I13 (potato type I serine protease inhibitor) family. In terms of assembly, heterogeneous tetramers of similar chains.

Inhibits both chymotrypsin and trypsin. This Solanum tuberosum (Potato) protein is Wound-induced proteinase inhibitor 1.